The following is a 1281-amino-acid chain: Dynactin subunit 1 (1281 aa).

The segment at 1–26 (MAQSRRHMSSRTPSGSRMSTEASARP) is disordered. Residues 10–22 (SRTPSGSRMSTEA) are compositionally biased toward polar residues. Residues 48–90 (GATLFATGKWVGVILDEAKGKNDGTVQGRKYFTCDEGHGIFVR) form the CAP-Gly domain. The segment at 100–221 (GADTTSPETP…SPSKEEEGLR (122 aa)) is disordered. Positions 102-114 (DTTSPETPDSSAS) are enriched in polar residues. Phosphothreonine occurs at positions 108, 145, 146, and 147. A compositionally biased stretch (basic residues) spans 129–152 (SKLRGLKPKKAPTARKTTTRRPKP). Over residues 161 to 205 (AGPSSSLGPSGSASAGELSSSEPSTPAQTPLAAPIIPTPALTSPG) the composition is skewed to low complexity. At Ser-179 the chain carries Phosphoserine; by PLK1. Ser-212 is subject to Phosphoserine; by CDK1. 3 coiled-coil regions span residues 214 to 547 (SKEE…RQQQ), 943 to 1049 (LKLE…EGLR), and 1185 to 1214 (SAQL…KETV). The segment at 911–1281 (EYDAERPPSK…LHQLHSRLIS (371 aa)) is interaction with HPS6.

The protein belongs to the dynactin 150 kDa subunit family. Monomer and homodimer. Subunit of dynactin, a multiprotein complex part of a tripartite complex with dynein and a adapter, such as BICDL1, BICD2 or HOOK3. The dynactin complex is built around ACTR1A/ACTB filament and consists of an actin-related filament composed of a shoulder domain, a pointed end and a barbed end. Its length is defined by its flexible shoulder domain. The soulder is composed of 2 DCTN1 subunits, 4 DCTN2 and 2 DCTN3. DCTN1/p150(glued) binds directly to microtubules and to cytoplasmic dynein. The 4 DCNT2 (via N-terminus) bind the ACTR1A filament and act as molecular rulers to determine the length. The pointed end is important for binding dynein-dynactin cargo adapters. Consists of 4 subunits: ACTR10, DCNT4, DCTN5 and DCTN6. The barbed end is composed of a CAPZA1:CAPZB heterodimers, which binds ACTR1A/ACTB filament and dynactin and stabilizes dynactin. Interacts with the C-terminus of MAPRE1, MAPRE2 and MAPRE3. Interacts with FBXL5. Interacts with ECPAS. Interacts with CLIP1. Interacts with CLN3 and DYNAP. Interacts with MISP; this interaction regulates its distribution at the cell cortex. Interacts with CEP131. Interacts with CEP126. Interacts with dynein intermediate chain and dynein heavy chain. Interacts with PLK1 (via POLO-box domain). Interacts with TBCB and PARD6A. Binds preferentially to tyrosinated microtubules than to detyrosinated microtubules. Interacts with KIF3A. Interacts with HPS6. Interacts with SNX6. Interacts with BICD2. Interacts with DST (isoform 1). Identified in a complex with MREG and RILP. Interacts with BCCIP. Interacts with DCDC1. Interacts with AKNA. Interacts with DYNC1I2. Interacts with RUFY3 and RUFY4. In terms of processing, ubiquitinated by a SCF complex containing FBXL5, leading to its degradation by the proteasome. Post-translationally, phosphorylation by SLK at Thr-145, Thr-146 and Thr-147 targets DCTN1 to the centrosome. It is uncertain if SLK phosphorylates all three threonines or one or two of them. PLK1-mediated phosphorylation at Ser-179 is essential for its localization in the nuclear envelope and promotes its dissociation from microtubules during early mitosis and positively regulates nuclear envelope breakdown during prophase.

It localises to the cytoplasm. The protein resides in the cytoskeleton. Its subcellular location is the microtubule organizing center. It is found in the centrosome. The protein localises to the centriole. It localises to the spindle. The protein resides in the nucleus envelope. Its subcellular location is the cell cortex. In terms of biological role, part of the dynactin complex that activates the molecular motor dynein for ultra-processive transport along microtubules. Plays a key role in dynein-mediated retrograde transport of vesicles and organelles along microtubules by recruiting and tethering dynein to microtubules. Binds to both dynein and microtubules providing a link between specific cargos, microtubules and dynein. Essential for targeting dynein to microtubule plus ends, recruiting dynein to membranous cargos and enhancing dynein processivity (the ability to move along a microtubule for a long distance without falling off the track). Can also act as a brake to slow the dynein motor during motility along the microtubule. Can regulate microtubule stability by promoting microtubule formation, nucleation and polymerization and by inhibiting microtubule catastrophe in neurons. Inhibits microtubule catastrophe by binding both to microtubules and to tubulin, leading to enhanced microtubule stability along the axon. Plays a role in metaphase spindle orientation. Plays a role in centriole cohesion and subdistal appendage organization and function. Its recruitment to the centriole in a KIF3A-dependent manner is essential for the maintenance of centriole cohesion and the formation of subdistal appendage. Also required for microtubule anchoring at the mother centriole. Plays a role in primary cilia formation. This Mus musculus (Mouse) protein is Dynactin subunit 1 (Dctn1).